The primary structure comprises 80 residues: DNA-binding protein HU-like (80 aa).

Belongs to the bacterial histone-like protein family.

Histone-like DNA-binding protein which is capable of wrapping DNA to stabilize it, and thus to prevent its denaturation under extreme environmental conditions. This chain is DNA-binding protein HU-like, found in Rickettsia prowazekii (strain Madrid E).